The chain runs to 103 residues: Large ribosomal subunit protein uL24 (103 aa).

Residues 70 to 103 form a disordered region; it reads YLDPSTNEPTRLGVRREDGKRVRYAKKSGKDLEN.

The protein belongs to the universal ribosomal protein uL24 family. In terms of assembly, part of the 50S ribosomal subunit.

One of two assembly initiator proteins, it binds directly to the 5'-end of the 23S rRNA, where it nucleates assembly of the 50S subunit. Functionally, one of the proteins that surrounds the polypeptide exit tunnel on the outside of the subunit. In Lactiplantibacillus plantarum (strain ATCC BAA-793 / NCIMB 8826 / WCFS1) (Lactobacillus plantarum), this protein is Large ribosomal subunit protein uL24.